Here is a 343-residue protein sequence, read N- to C-terminus: Anthranilate phosphoribosyltransferase (343 aa).

5-phospho-alpha-D-ribose 1-diphosphate contacts are provided by residues G86, 89-90 (GD), T94, 96-99 (NIST), 114-122 (KHGNRSASG), and S126. G86 is an anthranilate binding site. S98 contributes to the Mg(2+) binding site. Residue N117 coordinates anthranilate. R172 contacts anthranilate. Mg(2+) contacts are provided by D231 and E232.

The protein belongs to the anthranilate phosphoribosyltransferase family. As to quaternary structure, homodimer. Mg(2+) serves as cofactor.

It catalyses the reaction N-(5-phospho-beta-D-ribosyl)anthranilate + diphosphate = 5-phospho-alpha-D-ribose 1-diphosphate + anthranilate. Its pathway is amino-acid biosynthesis; L-tryptophan biosynthesis; L-tryptophan from chorismate: step 2/5. Functionally, catalyzes the transfer of the phosphoribosyl group of 5-phosphorylribose-1-pyrophosphate (PRPP) to anthranilate to yield N-(5'-phosphoribosyl)-anthranilate (PRA). The protein is Anthranilate phosphoribosyltransferase of Synechococcus sp. (strain JA-2-3B'a(2-13)) (Cyanobacteria bacterium Yellowstone B-Prime).